Consider the following 433-residue polypeptide: MQKEDFVDRVTIFVKAGDGGNGAVSFRREKYVPKGGPDGGDGGDGGFVILRANPGLSTLLNFKYQRRFIAQNGQHGKGKKQSGKSGEDLVIDVPVGTIVKDANTGEVLADLDRSWMMVCVARGGKGGRGNIHFATSVFRAPRIAEKGDKGEERWLELELKLLADAGLIGFPNVGKSSLISAMSNARPKIADYPFTTLVPNLGVVKIDENSEFVLADIPGLIERASEGAGLGNLFLRHIERCSVLVHVIDISGSEGRDFIKDYDVIVQELCKYNEQLSRKPQIIVANKIDLLEKDELEKRLETLEKHANQKIYPVSALLRINIDILKQKIFEIVGKSRLLLQKQPVPVFEKPKPIRTKIEERFDFEIKKTQDGFEICGEQIDKWLSRYSLEQKDALERFLDTLERNGLSEKLKQMGAHDGDTVWIGQYSFEYKE.

The region spanning 4–162 is the Obg domain; that stretch reads EDFVDRVTIF…RWLELELKLL (159 aa). An OBG-type G domain is found at 163–334; it reads ADAGLIGFPN…LKQKIFEIVG (172 aa). GTP is bound by residues 169–176, 194–198, 216–219, 286–289, and 315–317; these read GFPNVGKS, FTTLV, DIPG, NKID, and SAL. Mg(2+)-binding residues include Ser-176 and Thr-196. Positions 356–433 constitute an OCT domain; that stretch reads TKIEERFDFE…IGQYSFEYKE (78 aa).

Belongs to the TRAFAC class OBG-HflX-like GTPase superfamily. OBG GTPase family. In terms of assembly, monomer. It depends on Mg(2+) as a cofactor.

It localises to the cytoplasm. An essential GTPase which binds GTP, GDP and possibly (p)ppGpp with moderate affinity, with high nucleotide exchange rates and a fairly low GTP hydrolysis rate. Plays a role in control of the cell cycle, stress response, ribosome biogenesis and in those bacteria that undergo differentiation, in morphogenesis control. The sequence is that of GTPase Obg from Pseudothermotoga lettingae (strain ATCC BAA-301 / DSM 14385 / NBRC 107922 / TMO) (Thermotoga lettingae).